The sequence spans 238 residues: Pyridoxine 5'-phosphate synthase (238 aa).

Residue Asn7 participates in 3-amino-2-oxopropyl phosphate binding. A 1-deoxy-D-xylulose 5-phosphate-binding site is contributed by 9 to 10 (DH). Arg18 contacts 3-amino-2-oxopropyl phosphate. The Proton acceptor role is filled by His43. 1-deoxy-D-xylulose 5-phosphate contacts are provided by Arg45 and His50. The active-site Proton acceptor is Glu70. Thr100 contacts 1-deoxy-D-xylulose 5-phosphate. The active-site Proton donor is His190. 3-amino-2-oxopropyl phosphate is bound by residues Gly191 and 212 to 213 (GH).

This sequence belongs to the PNP synthase family. Homooctamer; tetramer of dimers.

It is found in the cytoplasm. The catalysed reaction is 3-amino-2-oxopropyl phosphate + 1-deoxy-D-xylulose 5-phosphate = pyridoxine 5'-phosphate + phosphate + 2 H2O + H(+). The protein operates within cofactor biosynthesis; pyridoxine 5'-phosphate biosynthesis; pyridoxine 5'-phosphate from D-erythrose 4-phosphate: step 5/5. Its function is as follows. Catalyzes the complicated ring closure reaction between the two acyclic compounds 1-deoxy-D-xylulose-5-phosphate (DXP) and 3-amino-2-oxopropyl phosphate (1-amino-acetone-3-phosphate or AAP) to form pyridoxine 5'-phosphate (PNP) and inorganic phosphate. The chain is Pyridoxine 5'-phosphate synthase from Prochlorococcus marinus (strain AS9601).